Reading from the N-terminus, the 224-residue chain is Polysialic acid transport ATP-binding protein KpsT (224 aa).

Residues 2 to 223 enclose the ABC transporter domain; sequence IKIENLTKSY…EYKMYQDLDI (222 aa). Position 38 to 45 (38 to 45) interacts with ATP; it reads GRNGAGKS.

The protein belongs to the ABC transporter superfamily.

Its subcellular location is the cell inner membrane. In terms of biological role, putative ATP-binding protein, and an energy coupling component for the transport of polysialic acid across the cytoplasmic membrane. The chain is Polysialic acid transport ATP-binding protein KpsT (kpsT) from Escherichia coli.